A 154-amino-acid polypeptide reads, in one-letter code: Putative pre-16S rRNA nuclease (154 aa).

Belongs to the YqgF nuclease family.

The protein resides in the cytoplasm. Its function is as follows. Could be a nuclease involved in processing of the 5'-end of pre-16S rRNA. The sequence is that of Putative pre-16S rRNA nuclease from Ruegeria pomeroyi (strain ATCC 700808 / DSM 15171 / DSS-3) (Silicibacter pomeroyi).